We begin with the raw amino-acid sequence, 617 residues long: Protein 4.1 (617 aa).

One can recognise an FERM domain in the interval 1-282 (MHCKVSLLDD…EHHTFFRLTS (282 aa)). Phosphotyrosine is present on tyrosine 13. Phosphothreonine is present on threonine 169. Positions 308–401 (TRQASALIDR…AEPEPSEAWK (94 aa)) are disordered. Serine 312, serine 331, and serine 333 each carry phosphoserine. Low complexity predominate over residues 348-361 (RPTSAPAIAPSPAA). The span at 387–396 (APPEDAEPEP) shows a compositional bias: acidic residues. Residues 401–466 (KKKRERLDGE…WDKRLSTHSP (66 aa)) form a spectrin--actin-binding region. Phosphotyrosine; by EGFR is present on tyrosine 413. A phosphoserine mark is found at serine 417, serine 427, serine 437, and serine 462. The residue at position 465 (serine 465) is a Phosphoserine; by CDK1. Positions 467–617 (FRTLNINGQI…VHQETEISEE (151 aa)) are C-terminal (CTD). Threonine 489 and threonine 612 each carry phosphothreonine.

As to quaternary structure, binds with a high affinity to glycophorin and with lower affinity to band III protein. Associates with the nuclear mitotic apparatus. Binds calmodulin, CPAP and DLG1. Also found to associate with contractile apparatus and tight junctions. Interacts with NUMA1; this interaction is negatively regulated by CDK1 during metaphase and promotes anaphase-specific localization of NUMA1 in symmetrically dividing cells. Interacts with ATP2B1; regulates small intestinal calcium absorption through regulation of membrane expression of ATP2B1. Post-translationally, phosphorylated at multiple sites by different protein kinases and each phosphorylation event selectively modulates the protein's functions. Phosphorylation on Tyr-413 reduces the ability of 4.1 to promote the assembly of the spectrin/actin/4.1 ternary complex.

Its subcellular location is the nucleus. It is found in the cytoplasm. The protein localises to the cytoskeleton. The protein resides in the cell cortex. Protein 4.1 is a major structural element of the erythrocyte membrane skeleton. It plays a key role in regulating membrane physical properties of mechanical stability and deformability by stabilizing spectrin-actin interaction. Recruits DLG1 to membranes. Required for dynein-dynactin complex and NUMA1 recruitment at the mitotic cell cortex during anaphase. This chain is Protein 4.1, found in Bos taurus (Bovine).